A 780-amino-acid polypeptide reads, in one-letter code: ATP-dependent 6-phosphofructokinase, muscle type (780 aa).

An N-acetylthreonine modification is found at Thr2. The N-terminal catalytic PFK domain 1 stretch occupies residues 2-390 (THEEHHATKT…NWEVYKLLAH (389 aa)). Residues Gly25, 88 to 89 (RC), and 118 to 121 (GDGS) each bind ATP. Residue Asp119 participates in Mg(2+) binding. At Ser133 the chain carries Phosphoserine. Residues 164–166 (SID), Arg201, 208–210 (MGR), Glu264, Arg292, and 298–301 (HVQR) each bind substrate. Catalysis depends on Asp166, which acts as the Proton acceptor. Phosphoserine is present on Ser377. The tract at residues 391–401 (VRPPVSKSGSH) is interdomain linker. Positions 402–780 (TVAVMNVGAP…TRKRSGEAAV (379 aa)) are C-terminal regulatory PFK domain 2. Beta-D-fructose 2,6-bisphosphate is bound by residues Arg471 and 528 to 532 (TVSNN). Ser530 is a glycosylation site (O-linked (GlcNAc) serine). Lys557 carries the post-translational modification N6-(2-hydroxyisobutyryl)lysine. Residues Arg566, 573-575 (MGG), Glu629, Arg655, and 661-664 (HMQQ) contribute to the beta-D-fructose 2,6-bisphosphate site. Ser667 bears the Phosphoserine mark. Arg735 is a binding site for beta-D-fructose 2,6-bisphosphate. A Phosphoserine modification is found at Ser775.

Belongs to the phosphofructokinase type A (PFKA) family. ATP-dependent PFK group I subfamily. Eukaryotic two domain clade 'E' sub-subfamily. Homo- and heterotetramers. Phosphofructokinase (PFK) enzyme functions as a tetramer composed of different combinations of 3 types of subunits, called PFKM (M), PFKL (L) and PFKP (P). The composition of the PFK tetramer differs according to the tissue type it is present in. The kinetic and regulatory properties of the tetrameric enzyme are dependent on the subunit composition, hence can vary across tissues. Interacts (via C-terminus) with HK1 (via N-terminal spermatogenic cell-specific region). The cofactor is Mg(2+). In terms of processing, glcNAcylation decreases enzyme activity.

The protein resides in the cytoplasm. The catalysed reaction is beta-D-fructose 6-phosphate + ATP = beta-D-fructose 1,6-bisphosphate + ADP + H(+). The protein operates within carbohydrate degradation; glycolysis; D-glyceraldehyde 3-phosphate and glycerone phosphate from D-glucose: step 3/4. With respect to regulation, allosterically activated by ADP, AMP, or fructose 2,6-bisphosphate, and allosterically inhibited by ATP or citrate. Catalyzes the phosphorylation of D-fructose 6-phosphate to fructose 1,6-bisphosphate by ATP, the first committing step of glycolysis. The protein is ATP-dependent 6-phosphofructokinase, muscle type (PFKM) of Pongo abelii (Sumatran orangutan).